Reading from the N-terminus, the 372-residue chain is sn-glycerol-3-phosphate import ATP-binding protein UgpC (372 aa).

Residues 2 to 233 (LDIQQLVKTY…PASTFVASFI (232 aa)) form the ABC transporter domain. 35 to 42 (GPSGCGKS) is a binding site for ATP.

Belongs to the ABC transporter superfamily. sn-glycerol-3-phosphate importer (TC 3.A.1.1.3) family. In terms of assembly, the complex is composed of two ATP-binding proteins (UgpC), two transmembrane proteins (UgpA and UgpE) and a solute-binding protein (UgpB).

The protein resides in the cell inner membrane. It carries out the reaction sn-glycerol 3-phosphate(out) + ATP + H2O = sn-glycerol 3-phosphate(in) + ADP + phosphate + H(+). Part of the ABC transporter complex UgpBAEC involved in sn-glycerol-3-phosphate (G3P) import. Responsible for energy coupling to the transport system. This chain is sn-glycerol-3-phosphate import ATP-binding protein UgpC, found in Vibrio vulnificus (strain CMCP6).